A 245-amino-acid chain; its full sequence is MAPK-interacting and spindle-stabilizing protein-like (245 aa).

The disordered stretch occupies residues 1–245 (MSDEFSLADA…PMPGGPHSYH (245 aa)). The residue at position 2 (Ser-2) is an N-acetylserine. Residues Ser-2, Ser-6, and Ser-15 each carry the phosphoserine modification. Polar residues predominate over residues 17–26 (AKTSAVSNTK). The span at 34 to 51 (WPGSNPWNNPSAPSSVPS) shows a compositional bias: low complexity. Composition is skewed to pro residues over residues 74-127 (SVPP…PELP), 164-190 (PNMP…PPVP), and 198-207 (AWGPPAPYPA).

This sequence belongs to the MISS family.

This Homo sapiens (Human) protein is MAPK-interacting and spindle-stabilizing protein-like (MAPK1IP1L).